Reading from the N-terminus, the 339-residue chain is Glucokinase (339 aa).

16-21 provides a ligand contact to ATP; it reads GDIGGT.

It belongs to the bacterial glucokinase family.

Its subcellular location is the cytoplasm. The catalysed reaction is D-glucose + ATP = D-glucose 6-phosphate + ADP + H(+). The protein is Glucokinase of Sinorhizobium fredii (strain NBRC 101917 / NGR234).